The following is a 131-amino-acid chain: MSWQTYVDEHLMCEIEGHHLASAAILGHDGTVWAQSADFPQFKPEEITGIMKDFDEPGHLAPTGMFVAAAKYMVIQGEPGAVIRGKKGAGGITIKKTGQALVVGIYDEPMTPGQCNMVVERLGDYLLKQGL.

Residues C13 and C115 are joined by a disulfide bond. The Involved in PIP2 interaction motif lies at 81-97 (AVIRGKKGAGGITIKKT). Position 111 is a phosphothreonine (T111).

The protein belongs to the profilin family. In terms of assembly, occurs in many kinds of cells as a complex with monomeric actin in a 1:1 ratio. Phosphorylated by MAP kinases.

It localises to the cytoplasm. Its subcellular location is the cytoskeleton. In terms of biological role, binds to actin and affects the structure of the cytoskeleton. At high concentrations, profilin prevents the polymerization of actin, whereas it enhances it at low concentrations. The protein is Profilin-6 of Phleum pratense (Common timothy).